A 36-amino-acid chain; its full sequence is Endoglucanase Cel12A (36 aa).

This sequence belongs to the glycosyl hydrolase 12 (cellulase H) family.

The protein localises to the secreted. The protein resides in the extracellular space. The catalysed reaction is Endohydrolysis of (1-&gt;4)-beta-D-glucosidic linkages in cellulose, lichenin and cereal beta-D-glucans.. In terms of biological role, has carboxymethylcellulase activity. This is Endoglucanase Cel12A from Gloeophyllum trabeum (Brown rot fungus).